The following is a 355-amino-acid chain: Lipopolysaccharide heptosyltransferase 1 (355 aa).

ADP-L-glycero-beta-D-manno-heptose contacts are provided by Thr186, Thr187, Lys191, Glu221, Asp260, Thr261, Gly262, and His265.

The protein belongs to the glycosyltransferase 9 family.

The protein resides in the cell inner membrane. The catalysed reaction is an alpha-Kdo-(2-&gt;4)-alpha-Kdo-(2-&gt;6)-lipid A + ADP-L-glycero-beta-D-manno-heptose = an L-alpha-D-Hep-(1-&gt;5)-[alpha-Kdo-(2-&gt;4)]-alpha-Kdo-(2-&gt;6)-lipid A + ADP + H(+). It participates in bacterial outer membrane biogenesis; LPS core biosynthesis. Functionally, glycosyltransferase involved in the biosynthesis of the core oligosaccharide region of lipopolysaccharide (LPS). Catalyzes the addition of the first heptose unit to one 3-deoxy-D-manno-octulosonic acid (Kdo) residue of the Kdo2-lipid A module. This chain is Lipopolysaccharide heptosyltransferase 1, found in Pseudomonas aeruginosa (strain ATCC 15692 / DSM 22644 / CIP 104116 / JCM 14847 / LMG 12228 / 1C / PRS 101 / PAO1).